Reading from the N-terminus, the 375-residue chain is Protein GOLM2 (375 aa).

Over 1–12 the chain is Cytoplasmic; sequence MVGFGANRRGGR. A helical; Signal-anchor for type II membrane protein transmembrane segment spans residues 13–33; it reads LPSFLLAALLLVIAVLAFNCW. A coiled-coil region spans residues 34–198; it reads NAASRQAVLR…REQKATQRIQ (165 aa). The Lumenal segment spans residues 34 to 375; sequence NAASRQAVLR…SKPRFGDGVL (342 aa). 3 disordered regions span residues 81–102, 193–327, and 342–375; these read LEQKEADYSQLSSQLQARDGQV, ATQR…DSQN, and RAVGLQKMKQNDEERDLQNDLVDYSKPRFGDGVL. Composition is skewed to basic and acidic residues over residues 193–204 and 350–375; these read ATQRIQSSKDAE and KQNDEERDLQNDLVDYSKPRFGDGVL.

Belongs to the GOLM family.

It localises to the membrane. This is Protein GOLM2 (GOLM2) from Gallus gallus (Chicken).